We begin with the raw amino-acid sequence, 145 residues long: D-aminoacyl-tRNA deacylase (145 aa).

Residues 137 to 138 (GP) carry the Gly-cisPro motif, important for rejection of L-amino acids motif.

The protein belongs to the DTD family. In terms of assembly, homodimer.

The protein resides in the cytoplasm. It catalyses the reaction glycyl-tRNA(Ala) + H2O = tRNA(Ala) + glycine + H(+). The enzyme catalyses a D-aminoacyl-tRNA + H2O = a tRNA + a D-alpha-amino acid + H(+). In terms of biological role, an aminoacyl-tRNA editing enzyme that deacylates mischarged D-aminoacyl-tRNAs. Also deacylates mischarged glycyl-tRNA(Ala), protecting cells against glycine mischarging by AlaRS. Acts via tRNA-based rather than protein-based catalysis; rejects L-amino acids rather than detecting D-amino acids in the active site. By recycling D-aminoacyl-tRNA to D-amino acids and free tRNA molecules, this enzyme counteracts the toxicity associated with the formation of D-aminoacyl-tRNA entities in vivo and helps enforce protein L-homochirality. This Lactobacillus gasseri (strain ATCC 33323 / DSM 20243 / BCRC 14619 / CIP 102991 / JCM 1131 / KCTC 3163 / NCIMB 11718 / NCTC 13722 / AM63) protein is D-aminoacyl-tRNA deacylase.